A 211-amino-acid polypeptide reads, in one-letter code: Metalloproteinase inhibitor 3 (211 aa).

An N-terminal signal peptide occupies residues 1 to 23; it reads MTPWLGLVVLLSCWSLGHWGTEA. C24 contacts Zn(2+). Involved in metalloproteinase-binding regions lie at residues 24–27 and 88–89; these read CTCS and ES. Disulfide bonds link C24–C91, C26–C118, C36–C143, C145–C192, C150–C155, and C163–C184. An NTR domain is found at 24 to 143; sequence CTCSPSHPQD…GLNYRYHLGC (120 aa). A mediates interaction with EFEMP1 region spans residues 105–188; it reads TGRVYEGKMY…SKHYACIRQK (84 aa).

The protein belongs to the protease inhibitor I35 (TIMP) family. In terms of assembly, interacts with EFEMP1. Interacts with KDR.

It is found in the secreted. It localises to the extracellular space. The protein localises to the extracellular matrix. In terms of biological role, mediates a variety of processes including matrix regulation and turnover, inflammation, and angiogenesis, through reversible inhibition of zinc protease superfamily enzymes, primarily matrix metalloproteinases (MMPs). Regulates extracellular matrix (ECM) remodeling through inhibition of matrix metalloproteinases (MMP) including MMP-1, MMP-2, MMP-3, MMP-7, MMP-9, MMP-13, MMP-14 and MMP-15. Additionally, modulates the processing of amyloid precursor protein (APP) and apolipoprotein E receptor ApoER2 by inhibiting two alpha-secretases ADAM10 and ADAM17. Functions as a tumor suppressor and a potent inhibitor of angiogenesis. Exerts its anti-angiogenic effect by directly interacting with vascular endothelial growth factor (VEGF) receptor-2/KDR, preventing its binding to the VEGFA ligand. Selectively induces apoptosis in angiogenic endothelial cells through a caspase-independent cell death pathway. Mechanistically, inhibits matrix-induced focal adhesion kinase PTK2 tyrosine phosphorylation and association with paxillin/PXN and disrupts the incorporation of ITGB3, PTK2 and PXN into focal adhesion contacts on the matrix. This is Metalloproteinase inhibitor 3 (Timp3) from Rattus norvegicus (Rat).